A 274-amino-acid polypeptide reads, in one-letter code: Ethanolamine ammonia-lyase small subunit (274 aa).

Residues Val161, Glu182, and Cys211 each contribute to the adenosylcob(III)alamin site.

It belongs to the EutC family. In terms of assembly, the basic unit is a heterodimer which dimerizes to form tetramers. The heterotetramers trimerize; 6 large subunits form a core ring with 6 small subunits projecting outwards. The cofactor is adenosylcob(III)alamin.

It localises to the bacterial microcompartment. It carries out the reaction ethanolamine = acetaldehyde + NH4(+). The protein operates within amine and polyamine degradation; ethanolamine degradation. Catalyzes the deamination of various vicinal amino-alcohols to oxo compounds. Allows this organism to utilize ethanolamine as the sole source of nitrogen and carbon in the presence of external vitamin B12. The protein is Ethanolamine ammonia-lyase small subunit of Pseudomonas fluorescens (strain Pf0-1).